The sequence spans 410 residues: Arginine deiminase (410 aa).

Cys-398 serves as the catalytic Amidino-cysteine intermediate.

This sequence belongs to the arginine deiminase family.

It is found in the cytoplasm. The catalysed reaction is L-arginine + H2O = L-citrulline + NH4(+). It participates in amino-acid degradation; L-arginine degradation via ADI pathway; carbamoyl phosphate from L-arginine: step 1/2. The polypeptide is Arginine deiminase (Limosilactobacillus reuteri (strain DSM 20016) (Lactobacillus reuteri)).